The following is a 187-amino-acid chain: Dihydrofolate reductase 2, mitochondrial (187 aa).

A DHFR domain is found at 4–185 (LLNCIVAVSQ…IKYKFEVCEK (182 aa)). Residues alanine 10 and 16 to 22 (GIGKNGD) contribute to the NADP(+) site. 31 to 36 (EFRYFQ) is a substrate binding site. 55–57 (RKT) is a binding site for NADP(+). Arginine 71 is a binding site for substrate. NADP(+) is bound by residues 77–79 (SRE) and 117–124 (GGSSVYKE).

Belongs to the dihydrofolate reductase family. Expressed in numerous cell lines.

It is found in the mitochondrion. It localises to the mitochondrion matrix. The protein localises to the mitochondrion inner membrane. It carries out the reaction (6S)-5,6,7,8-tetrahydrofolate + NADP(+) = 7,8-dihydrofolate + NADPH + H(+). The protein operates within cofactor biosynthesis; tetrahydrofolate biosynthesis; 5,6,7,8-tetrahydrofolate from 7,8-dihydrofolate: step 1/1. Its function is as follows. Key enzyme in folate metabolism. Contributes to the de novo mitochondrial thymidylate biosynthesis pathway. Required to prevent uracil accumulation in mtDNA. Binds its own mRNA and that of DHFR. The chain is Dihydrofolate reductase 2, mitochondrial from Homo sapiens (Human).